The chain runs to 459 residues: Interleukin-7 receptor subunit alpha (459 aa).

A signal peptide spans 1–20 (MTILGTTFGMVFSLLQVVSG). At 21-239 (ESGYAQNGDL…EINNSSGEMD (219 aa)) the chain is on the extracellular side. An intrachain disulfide couples cysteine 42 to cysteine 57. N-linked (GlcNAc...) asparagine glycans are attached at residues asparagine 49 and asparagine 65. Cystine bridges form between cysteine 74–cysteine 82 and cysteine 108–cysteine 118. The Fibronectin type-III domain maps to 131–231 (APFDLSVVYR…PSYYFRTPEI (101 aa)). 2 N-linked (GlcNAc...) asparagine glycosylation sites follow: asparagine 151 and asparagine 182. Positions 217–221 (WSEWS) match the WSXWS motif motif. 2 N-linked (GlcNAc...) asparagine glycosylation sites follow: asparagine 232 and asparagine 233. A helical membrane pass occupies residues 240-264 (PILLTISILSFFSVALLVILACVLW). Residues 265–459 (KKRIKPIVWP…VTMSSFYQNQ (195 aa)) are Cytoplasmic-facing. Positions 272 to 280 (VWPSLPDHK) match the Box 1 motif motif. Phosphothreonine; by PKC is present on threonine 282.

Belongs to the type I cytokine receptor family. Type 4 subfamily. In terms of assembly, the IL7 receptor is a heterodimer of IL7R and IL2RG. The TSLP receptor is a heterodimer of CRLF2 and IL7R. Interacts with CD53. In terms of processing, N-glycosylated IL-7Ralpha binds IL7 300-fold more tightly than the unglycosylated form. Ubiquitinated by MARCHF8; leading to lysosomal degradation.

The protein resides in the cell membrane. The protein localises to the secreted. In terms of biological role, receptor for interleukin-7. Also acts as a receptor for thymic stromal lymphopoietin (TSLP). This Homo sapiens (Human) protein is Interleukin-7 receptor subunit alpha (IL7R).